Here is a 377-residue protein sequence, read N- to C-terminus: Probable trehalose-phosphate phosphatase G (377 aa).

Positions 1–20 (MDLNINKTTPVLSDPTTPVS) are disordered.

This sequence belongs to the trehalose phosphatase family. The cofactor is a divalent metal cation.

The enzyme catalyses alpha,alpha-trehalose 6-phosphate + H2O = alpha,alpha-trehalose + phosphate. It participates in glycan biosynthesis; trehalose biosynthesis. In terms of biological role, removes the phosphate from trehalose 6-phosphate to produce free trehalose. Trehalose accumulation in plant may improve abiotic stress tolerance. This chain is Probable trehalose-phosphate phosphatase G (TPPG), found in Arabidopsis thaliana (Mouse-ear cress).